The sequence spans 185 residues: Threonylcarbamoyl-AMP synthase (185 aa).

One can recognise a YrdC-like domain in the interval 4–185 (SFRVQQAARE…LATGEVVRPG (182 aa)).

The protein belongs to the SUA5 family. TsaC subfamily.

The protein localises to the cytoplasm. It carries out the reaction L-threonine + hydrogencarbonate + ATP = L-threonylcarbamoyladenylate + diphosphate + H2O. Required for the formation of a threonylcarbamoyl group on adenosine at position 37 (t(6)A37) in tRNAs that read codons beginning with adenine. Catalyzes the conversion of L-threonine, HCO(3)(-)/CO(2) and ATP to give threonylcarbamoyl-AMP (TC-AMP) as the acyladenylate intermediate, with the release of diphosphate. This chain is Threonylcarbamoyl-AMP synthase, found in Pseudomonas putida (strain ATCC 47054 / DSM 6125 / CFBP 8728 / NCIMB 11950 / KT2440).